Reading from the N-terminus, the 275-residue chain is Expansin-B6 (275 aa).

Residues 1–25 (MAARMGSKVAAILAILSVLVVHGSC) form the signal peptide. N33 is a glycosylation site (N-linked (GlcNAc...) asparagine). Positions 64–170 (GGACGFKNVN…RRVPCNYPGL (107 aa)) constitute an Expansin-like EG45 domain. Disulfide bonds link C67-C95, C98-C165, and C103-C109. The region spanning 183 to 270 (VYFAVLVEYE…NWSPNSNYRS (88 aa)) is the Expansin-like CBD domain.

It belongs to the expansin family. Expansin B subfamily. Expressed in internodes.

Its subcellular location is the secreted. It localises to the cell wall. The protein resides in the membrane. Its function is as follows. May cause loosening and extension of plant cell walls by disrupting non-covalent bonding between cellulose microfibrils and matrix glucans. No enzymatic activity has been found. May be required for rapid internodal elongation in deepwater rice during submergence. The protein is Expansin-B6 (EXPB6) of Oryza sativa subsp. japonica (Rice).